Reading from the N-terminus, the 1077-residue chain is ATP-dependent helicase HRQ1 (1077 aa).

Residues 299-483 (INSLHQGENV…DMFGINEVTL (185 aa)) form the Helicase ATP-binding domain. ATP is bound at residue 312–319 (TSTSSGKS). Residues 423–426 (DELH) carry the DEAH box motif. One can recognise a Helicase C-terminal domain in the interval 521-678 (ILVQLILNNV…DLVLDFNNIL (158 aa)).

Belongs to the helicase family. HRQ1 subfamily. Forms heptamer rings. Interacts with RAD4. Mg(2+) serves as cofactor.

The protein resides in the nucleus. The catalysed reaction is Couples ATP hydrolysis with the unwinding of duplex DNA by translocating in the 3'-5' direction.. It carries out the reaction ATP + H2O = ADP + phosphate + H(+). Helicase with 3'-5' helicase activity involved in genome stability. Functions in the RAD4-dependent nucleotide excision repair (NER) pathway and plays a critical role in DNA interstrand cross-link repair. Unwinds relatively long duplex DNA up to 120-bp and requires a long 3'-tail of at least 70 nucleotides for efficient unwinding of duplex DNA. Activity is significantly stimulated by a preexisting fork structure. Shows both processive helicase and DNA strand annealing activities. Affects telomere length by a non-catalytic mechanism, probably through inhibiting telomerase by competing with it for ssDNA binding. This chain is ATP-dependent helicase HRQ1, found in Saccharomyces cerevisiae (strain ATCC 204508 / S288c) (Baker's yeast).